A 525-amino-acid polypeptide reads, in one-letter code: GMP synthase [glutamine-hydrolyzing] (525 aa).

The 199-residue stretch at Arg9–Leu207 folds into the Glutamine amidotransferase type-1 domain. Residue Cys86 is the Nucleophile of the active site. Active-site residues include His181 and Glu183. In terms of domain architecture, GMPS ATP-PPase spans Trp208 to Arg400. Ser235 to Ser241 lines the ATP pocket.

As to quaternary structure, homodimer.

It carries out the reaction XMP + L-glutamine + ATP + H2O = GMP + L-glutamate + AMP + diphosphate + 2 H(+). Its pathway is purine metabolism; GMP biosynthesis; GMP from XMP (L-Gln route): step 1/1. In terms of biological role, catalyzes the synthesis of GMP from XMP. In Escherichia coli O139:H28 (strain E24377A / ETEC), this protein is GMP synthase [glutamine-hydrolyzing].